The primary structure comprises 169 residues: Putative phosphoesterase SE_0715 (169 aa).

The Proton donor role is filled by H34. Short sequence motifs (HXTX) lie at residues 34 to 37 and 115 to 118; these read HITI and HFTI. Catalysis depends on H115, which acts as the Proton acceptor.

The protein belongs to the 2H phosphoesterase superfamily. YjcG family.

This is Putative phosphoesterase SE_0715 from Staphylococcus epidermidis (strain ATCC 12228 / FDA PCI 1200).